A 984-amino-acid polypeptide reads, in one-letter code: MQEHLVVTLDGKDYLVEPGTNLLEFIKSQDTFVPSICYNESMGPIQTCDTCTVEIDGKIERSCSTVIDRPMTVNTVNNDVKDAQKEALDRILEKHMLYCTVCDYNNGDCEIHNTMDAWGLQHQTYEYKEKPYEKDYGPFYRYDPNQCILCGRCVEACQDIELNETIRIDWDREHPRVIWDNDVPINESSCVSCGQCATVCPCNAMMEVNMEGNAGYMTDTEPGSLAAMIDLTKKAEPGYGPLFAISDSEAEMRKERIKKTKTVCTYCGVGCSFEVWTKDREILKVQPSHDSPANKIATCVKGKFSWGHINSDQRLTKPLVRKNGEFHEVEWDEALNVIADNFTSIKEKHGPDALSFISSSKATNEESYLMQKLARQVIGTNNVDNCSRYCQAPATKGLFRTVGHGGDSGSIEDLEKAAMSVLIGTNTAEAHPVIASRMKRAQKLFGQKIHVFDIRKHEMAERADRFYQPKPGTDLAWLSAVTKYIIDHDLHDKAFIEEWVEDFDEYYKSLETFTMAFAEEATGIPEAELIKFAEECAKAESVVICWAMGITQQDIGSDSSTAISNLLLVTGNYRRPGTGAYPLRGHNNVQGCSDIGSMPDKITGYQSIEADDIRAKFEKEYGVKLNPKAGKDNHEMVEGIHDGQIHSLYLYGEDTGIVDSNINFVQAAFEKLDFMVVQDEFLTFTATYADVVLPASPSLEKDGTFTNTERRIQRLYQALKPLGDSKPDWKIFQAIANKLSFDWNYKHPSEIMDEIARLTPLYAGVSYERLEGFNSLQWPVHPDGTDEPILYLEGFNFDNGKAKLFPLSFDNYFKQDEVYDIHVNNGRLLEHFHEGNMTYQTPMLKYKVPRAFVEISPELAEDRGIHEGAEVKLISETGEAVLQVHVTDRVKGKEIYIPLNNDAMENGDLGAINLLTNSDVDQYTDTPSYKRTSCRMEVITKRGKSPLNPNNFRVNKKRHPQYSVQVQKKWERPDYVFPGNQVDK.

One can recognise a 2Fe-2S ferredoxin-type domain in the interval 3–79; the sequence is EHLVVTLDGK…PMTVNTVNND (77 aa). [2Fe-2S] cluster contacts are provided by Cys37, Cys48, Cys51, and Cys63. The region spanning 79–119 is the 4Fe-4S His(Cys)3-ligated-type domain; the sequence is DVKDAQKEALDRILEKHMLYCTVCDYNNGDCEIHNTMDAWG. The [4Fe-4S] cluster site is built by His95, Cys99, Cys102, Cys109, Cys147, Cys150, Cys153, Cys157, Cys190, Cys193, Cys196, Cys200, Cys264, Cys267, Cys271, and Cys299. 4Fe-4S ferredoxin-type domains are found at residues 138–165 and 181–211; these read PFYR…LNET and NDVP…VNME. Residues 252 to 984 are formate dehydrogenase; it reads MRKERIKKTK…YVFPGNQVDK (733 aa). One can recognise a 4Fe-4S Mo/W bis-MGD-type domain in the interval 257–313; sequence IKKTKTVCTYCGVGCSFEVWTKDREILKVQPSHDSPANKIATCVKGKFSWGHINSDQ.

It in the C-terminal section; belongs to the prokaryotic molybdopterin-containing oxidoreductase family. The cofactor is [2Fe-2S] cluster. [4Fe-4S] cluster serves as cofactor. It depends on Mo-bis(molybdopterin guanine dinucleotide) as a cofactor.

The catalysed reaction is formate + NAD(+) = CO2 + NADH. This is Putative formate dehydrogenase SAR2393 from Staphylococcus aureus (strain MRSA252).